A 224-amino-acid polypeptide reads, in one-letter code: Claudin-19 (224 aa).

Topologically, residues 1–7 are cytoplasmic; that stretch reads MANSGLQ. The chain crosses the membrane as a helical span at residues 8 to 28; sequence LLGYFLALGGWVGIIASTALP. Residues 29 to 81 are Extracellular-facing; sequence QWKQSSYAGDAIITAVGLYEGLWMSCASQSTGQVQCKLYDSLLALDGHIQSAR. Cys-54 and Cys-64 are joined by a disulfide. Residues 82–102 form a helical membrane-spanning segment; sequence ALMVVAVLLGFVAMVLSVVGM. Over 103-117 the chain is Cytoplasmic; the sequence is KCTRVGDSNPTAKSR. The chain crosses the membrane as a helical span at residues 118–138; sequence VAISGGALFLLAGLCTLTAVS. Topologically, residues 139–160 are extracellular; the sequence is WYATLVTQEFFNPSTPVNARYE. Residues 161–181 form a helical membrane-spanning segment; it reads FGPALFVGWASAGLAMLGGSF. Residues 182-224 are Cytoplasmic-facing; sequence LCCTCPEPERANSIPQPYRSGPSTAAREPVVKLPASVKGPLGV.

The protein belongs to the claudin family. Can form homo- and heteropolymeric tight junction strands. Interacts with other claudins including CLDN3, CLDN10, CLDN16 and CLDN18 with highest affinity for CLDN16. Interacts (via PDZ-binding motif TRV) with TJP1 (via PDZ domain). In terms of assembly, (Microbial infection) Interacts (via both extracellular domains) with Clostridium perfringens enterotoxin CPE; the interaction disrupts claudin assembly in tight junctions. As to expression, expressed in the corticomedullary axis of the TAL, specifically in the cortex and the outer stripe of outer medulla (OSOM) zone (at protein level). Expressed in peripheral nervous system, in Schwan cells (at protein level).

It localises to the cell junction. The protein resides in the tight junction. The protein localises to the cell membrane. It carries out the reaction Mg(2+)(in) = Mg(2+)(out). The enzyme catalyses Ca(2+)(in) = Ca(2+)(out). It catalyses the reaction Na(+)(in) = Na(+)(out). The catalysed reaction is K(+)(in) = K(+)(out). It carries out the reaction Rb(+)(in) = Rb(+)(out). The enzyme catalyses Cs(+)(in) = Cs(+)(out). It catalyses the reaction Li(+)(in) = Li(+)(out). Forms paracellular channels: coassembles with CLDN16 into tight junction strands with cation-selective channels through the strands, conveying epithelial permeability in a process known as paracellular tight junction permeability. Involved in the maintenance of ion gradients along the nephron. In the thick ascending limb (TAL) of Henle's loop, facilitates sodium paracellular permeability from the interstitial compartment to the lumen, contributing to the lumen-positive transepithelial potential that drives paracellular magnesium and calcium reabsorption. Forms paracellular barriers on its own. In the peripheral nervous system, represents a major constituent of the tight junctions in Schwann cells and contributes to electrical sealing. During retinal neurogenesis, may regulate the barrier properties of tight junctions in retinal pigment epithelium, required for proper retinal tissue differentiation and vision. The protein is Claudin-19 of Mus musculus (Mouse).